A 1192-amino-acid chain; its full sequence is Probable ATP-dependent RNA helicase kurz (1192 aa).

The tract at residues 170–214 (ELQAKRKNPNVISVEEDDEDSSSSDEDDEEAPAQSAPIAIPTPVS) is disordered. The span at 183–200 (VEEDDEDSSSSDEDDEEA) shows a compositional bias: acidic residues. The 167-residue stretch at 270 to 436 (METINENPIV…TRLFKIPPPL (167 aa)) folds into the Helicase ATP-binding domain. 283–290 (GETGSGKT) is an ATP binding site. Residues 379–382 (DEAH) carry the DEAH box motif. The interval 504 to 529 (APTKDVAKNGKVSEEEKEETIDDAAS) is disordered. Residues 505-517 (PTKDVAKNGKVSE) are compositionally biased toward basic and acidic residues. S529 bears the Phosphoserine mark. At T530 the chain carries Phosphothreonine. Residues 540–746 (DMKRVIRNIR…DLMLQMRCMG (207 aa)) enclose the Helicase C-terminal domain. Residues 567–583 (DDYKLPGDDTEADMHEQ) are compositionally biased toward basic and acidic residues. Positions 567–612 (DDYKLPGDDTEADMHEQPDEDDEQEGLEEDNDDELGLEDESGMGSG) are disordered. The segment covering 584–607 (PDEDDEQEGLEEDNDDELGLEDES) has biased composition (acidic residues).

It belongs to the DEAD box helicase family. DEAH subfamily.

The catalysed reaction is ATP + H2O = ADP + phosphate + H(+). This chain is Probable ATP-dependent RNA helicase kurz (kz), found in Drosophila melanogaster (Fruit fly).